We begin with the raw amino-acid sequence, 271 residues long: Probable ribosomal RNA small subunit methyltransferase A (271 aa).

S-adenosyl-L-methionine is bound by residues H19, L21, G46, E67, D92, and N107.

It belongs to the class I-like SAM-binding methyltransferase superfamily. rRNA adenine N(6)-methyltransferase family. RsmA subfamily.

The protein localises to the cytoplasm. Functionally, specifically dimethylates two adjacent adenosines in the loop of a conserved hairpin near the 3'-end of 16S rRNA in the 30S particle. May play a critical role in biogenesis of 30S subunits. This chain is Probable ribosomal RNA small subunit methyltransferase A, found in Methanosarcina mazei (strain ATCC BAA-159 / DSM 3647 / Goe1 / Go1 / JCM 11833 / OCM 88) (Methanosarcina frisia).